A 348-amino-acid polypeptide reads, in one-letter code: tRNA N6-adenosine threonylcarbamoyltransferase (348 aa).

Fe cation contacts are provided by H111 and H115. Substrate is bound by residues L134–G138, D167, G180, D184, and N280. A Fe cation-binding site is contributed by D308.

The protein belongs to the KAE1 / TsaD family. It depends on Fe(2+) as a cofactor.

Its subcellular location is the cytoplasm. The enzyme catalyses L-threonylcarbamoyladenylate + adenosine(37) in tRNA = N(6)-L-threonylcarbamoyladenosine(37) in tRNA + AMP + H(+). Its function is as follows. Required for the formation of a threonylcarbamoyl group on adenosine at position 37 (t(6)A37) in tRNAs that read codons beginning with adenine. Is involved in the transfer of the threonylcarbamoyl moiety of threonylcarbamoyl-AMP (TC-AMP) to the N6 group of A37, together with TsaE and TsaB. TsaD likely plays a direct catalytic role in this reaction. The chain is tRNA N6-adenosine threonylcarbamoyltransferase from Rippkaea orientalis (strain PCC 8801 / RF-1) (Cyanothece sp. (strain PCC 8801)).